A 240-amino-acid chain; its full sequence is UDP-2,3-diacylglucosamine hydrolase (240 aa).

Residues Asp-8, His-10, Asp-41, Asn-79, and His-114 each coordinate Mn(2+). 79 to 80 (NR) contacts substrate. Asp-122, Ser-160, Asn-164, Lys-167, and His-195 together coordinate substrate. Positions 195 and 197 each coordinate Mn(2+).

The protein belongs to the LpxH family. Mn(2+) serves as cofactor.

It is found in the cell inner membrane. The protein localises to the cytoplasm. It carries out the reaction UDP-2-N,3-O-bis[(3R)-3-hydroxytetradecanoyl]-alpha-D-glucosamine + H2O = 2-N,3-O-bis[(3R)-3-hydroxytetradecanoyl]-alpha-D-glucosaminyl 1-phosphate + UMP + 2 H(+). It functions in the pathway glycolipid biosynthesis; lipid IV(A) biosynthesis; lipid IV(A) from (3R)-3-hydroxytetradecanoyl-[acyl-carrier-protein] and UDP-N-acetyl-alpha-D-glucosamine: step 4/6. Inhibited by a sulfonyl piperazine compound that shows antibacterial activity against E.coli; LpxH is the cellular target of this compound. Inhibited by 0.01% (or more) Triton X-100 in vitro. Hydrolyzes the pyrophosphate bond of UDP-2,3-diacylglucosamine to yield 2,3-diacylglucosamine 1-phosphate (lipid X) and UMP by catalyzing the attack of water at the alpha-P atom. Involved in the biosynthesis of lipid A, a phosphorylated glycolipid that anchors the lipopolysaccharide to the outer membrane of the cell. Is essential for E.coli growth. Does not cleave the unacylated UDP-GlcNAc, the mono-acylated UDP-3-O-(R)-3-hydroxymyristoyl-GlcNAc, and CDP-diacylglycerol. The sequence is that of UDP-2,3-diacylglucosamine hydrolase from Escherichia coli (strain K12).